The primary structure comprises 382 residues: Galactokinase (382 aa).

34–37 (EHTD) lines the substrate pocket. 124 to 130 (GAGLSSS) provides a ligand contact to ATP. Mg(2+) contacts are provided by S130 and E162. The active-site Proton acceptor is D174. Y223 contributes to the substrate binding site.

It belongs to the GHMP kinase family. GalK subfamily.

The protein resides in the cytoplasm. The catalysed reaction is alpha-D-galactose + ATP = alpha-D-galactose 1-phosphate + ADP + H(+). Its pathway is carbohydrate metabolism; galactose metabolism. In terms of biological role, catalyzes the transfer of the gamma-phosphate of ATP to D-galactose to form alpha-D-galactose-1-phosphate (Gal-1-P). This is Galactokinase from Cronobacter sakazakii (strain ATCC BAA-894) (Enterobacter sakazakii).